A 99-amino-acid polypeptide reads, in one-letter code: Aspartyl/glutamyl-tRNA(Asn/Gln) amidotransferase subunit C (99 aa).

This sequence belongs to the GatC family. In terms of assembly, heterotrimer of A, B and C subunits.

It carries out the reaction L-glutamyl-tRNA(Gln) + L-glutamine + ATP + H2O = L-glutaminyl-tRNA(Gln) + L-glutamate + ADP + phosphate + H(+). The enzyme catalyses L-aspartyl-tRNA(Asn) + L-glutamine + ATP + H2O = L-asparaginyl-tRNA(Asn) + L-glutamate + ADP + phosphate + 2 H(+). Its function is as follows. Allows the formation of correctly charged Asn-tRNA(Asn) or Gln-tRNA(Gln) through the transamidation of misacylated Asp-tRNA(Asn) or Glu-tRNA(Gln) in organisms which lack either or both of asparaginyl-tRNA or glutaminyl-tRNA synthetases. The reaction takes place in the presence of glutamine and ATP through an activated phospho-Asp-tRNA(Asn) or phospho-Glu-tRNA(Gln). This is Aspartyl/glutamyl-tRNA(Asn/Gln) amidotransferase subunit C from Delftia acidovorans (strain DSM 14801 / SPH-1).